The chain runs to 399 residues: Chromosomal replication initiator protein DnaA (399 aa).

The domain I, interacts with DnaA modulators stretch occupies residues 1-64 (MELNALIKKI…EEEVRKLIEV (64 aa)). The segment at 64–77 (VKEKEEKKKVEIKD) is domain II. The domain III, AAA+ region stretch occupies residues 78 to 290 (FLNPKYTLEN…GKIKLIKLKG (213 aa)). ADP-binding residues include I89, N94, G122, T123, G124, K125, T126, and H127. I89 provides a ligand contact to ATP. G122 provides a ligand contact to ATP. Residues G124, K125, T126, and H127 each coordinate ATP. Residue T126 coordinates Mg(2+). V156 contributes to the ssDNA binding site. D180 lines the ATP pocket. Residue D181 participates in Mg(2+) binding. The ssDNA site is built by K188, R190, and T191. R277 contacts ATP. The segment at 291–399 (FEGLERKERK…LEKQAFDKIC (109 aa)) is domain IV, binds dsDNA.

The protein belongs to the DnaA family. In terms of assembly, in the presence of ATP analog AMP-PCP forms a linear, right-handed spiral filament with 4 subunits arranged head-to-tail, about 122 Angstroms wide and about 360 Angstroms long. Mg(2+)-AMP-PCP binds at the subunit interface with the gamma phosphate coordinated by adjacent subunits. dsDNA probably wraps on the outside of the filament. ssDNA binds to the center of the helical filament via the AAA+ domain, which stretches the DNA.

It is found in the cytoplasm. Functionally, plays an essential role in the initiation and regulation of chromosomal replication. ATP-DnaA binds to the origin of replication (oriC) to initiate formation of the DNA replication initiation complex once per cell cycle. Binds the DnaA box (a 9 base pair repeat at the origin) and separates the double-stranded (ds)DNA. Forms a right-handed helical filament on oriC DNA; dsDNA binds to the exterior of the filament while single-stranded (ss)DNA is stabiized in the filament's interior. The ATP-DnaA-oriC complex binds and stabilizes one strand of the AT-rich DNA unwinding element (DUE), permitting loading of DNA polymerase. After initiation quickly degrades to an ADP-DnaA complex that is not apt for DNA replication. Binds acidic phospholipids. Its function is as follows. Able to melt short unstable dsDNA (15-mer with melting temperature, TM, 43 degrees Celsius) in the presence of a non-hydrolyzable ATP analog; a more stable dsDNA (20-mer, TM 55 degrees Celsius) is poor substrate. ADP does not support dsDNA melting. Addition of DnaA-AMP-PCP (an ATP analog, beta,gamma-methyleneadenosine 5'-triphosphate) to an oric-containing plasmid causes a DNA shift to more positively supercoiled topological species, stabilizing a positive wrap and right-handed filament as seen in the crystal structure without DNA. Filament formation generated by positive supercoiling may destabilize the origin unwinding element through compensatory negative supercoiling strain. In Aquifex aeolicus (strain VF5), this protein is Chromosomal replication initiator protein DnaA.